Reading from the N-terminus, the 278-residue chain is Dermonecrotic toxin LlSicTox-alphaIII3ii (278 aa).

His-5 is a catalytic residue. Mg(2+)-binding residues include Glu-25 and Asp-27. The Nucleophile role is filled by His-40. A disulfide bond links Cys-44 and Cys-50. Asp-84 serves as a coordination point for Mg(2+).

This sequence belongs to the arthropod phospholipase D family. Class I subfamily. It depends on Mg(2+) as a cofactor. In terms of tissue distribution, expressed by the venom gland.

Its subcellular location is the secreted. It catalyses the reaction an N-(acyl)-sphingosylphosphocholine = an N-(acyl)-sphingosyl-1,3-cyclic phosphate + choline. The enzyme catalyses an N-(acyl)-sphingosylphosphoethanolamine = an N-(acyl)-sphingosyl-1,3-cyclic phosphate + ethanolamine. It carries out the reaction a 1-acyl-sn-glycero-3-phosphocholine = a 1-acyl-sn-glycero-2,3-cyclic phosphate + choline. The catalysed reaction is a 1-acyl-sn-glycero-3-phosphoethanolamine = a 1-acyl-sn-glycero-2,3-cyclic phosphate + ethanolamine. Its function is as follows. Dermonecrotic toxins cleave the phosphodiester linkage between the phosphate and headgroup of certain phospholipids (sphingolipid and lysolipid substrates), forming an alcohol (often choline) and a cyclic phosphate. This toxin acts on sphingomyelin (SM). It may also act on ceramide phosphoethanolamine (CPE), lysophosphatidylcholine (LPC) and lysophosphatidylethanolamine (LPE), but not on lysophosphatidylserine (LPS), and lysophosphatidylglycerol (LPG). It acts by transphosphatidylation, releasing exclusively cyclic phosphate products as second products. Induces dermonecrosis, hemolysis, increased vascular permeability, edema, inflammatory response, and platelet aggregation. This is Dermonecrotic toxin LlSicTox-alphaIII3ii from Loxosceles laeta (South American recluse spider).